Consider the following 322-residue polypeptide: Glycerol-3-phosphate dehydrogenase [NAD(P)+] (322 aa).

Trp13, His33, and Lys99 together coordinate NADPH. 3 residues coordinate sn-glycerol 3-phosphate: Lys99, Gly127, and Ser129. Residue Ala131 participates in NADPH binding. Sn-glycerol 3-phosphate-binding residues include Lys182, Asp235, Ser245, Arg246, and Asn247. The active-site Proton acceptor is the Lys182. Residue Arg246 participates in NADPH binding. NADPH is bound at residue Glu272.

The protein belongs to the NAD-dependent glycerol-3-phosphate dehydrogenase family.

Its subcellular location is the cytoplasm. It carries out the reaction sn-glycerol 3-phosphate + NAD(+) = dihydroxyacetone phosphate + NADH + H(+). The catalysed reaction is sn-glycerol 3-phosphate + NADP(+) = dihydroxyacetone phosphate + NADPH + H(+). Its pathway is membrane lipid metabolism; glycerophospholipid metabolism. Functionally, catalyzes the reduction of the glycolytic intermediate dihydroxyacetone phosphate (DHAP) to sn-glycerol 3-phosphate (G3P), the key precursor for phospholipid synthesis. The protein is Glycerol-3-phosphate dehydrogenase [NAD(P)+] of Ruthia magnifica subsp. Calyptogena magnifica.